The chain runs to 115 residues: MLRIYHSQLTLLSHSTPWPSLTKSVRCTHIIIHGTCLSGLYPVQFTHKTHDYPHFNIYISFSGSKYCITALNAYIIPLLLHILTIQFIHTYFNIPTKSPLKLPKHKNILLFNNNT.

Belongs to the UPF0320 family.

This Saccharomyces cerevisiae (strain ATCC 204508 / S288c) (Baker's yeast) protein is Putative UPF0320 protein YKL225W.